Consider the following 207-residue polypeptide: Small ribosomal subunit protein uS4 (207 aa).

The tract at residues 32-55 (CKLDSKPGQHGRTSGARTSDYGTQ) is disordered. Residues 42-53 (GRTSGARTSDYG) show a composition bias toward polar residues. The 62-residue stretch at 97–158 (SRLDNVVYRM…TKKKQARILE (62 aa)) folds into the S4 RNA-binding domain.

The protein belongs to the universal ribosomal protein uS4 family. As to quaternary structure, part of the 30S ribosomal subunit. Contacts protein S5. The interaction surface between S4 and S5 is involved in control of translational fidelity.

Its function is as follows. One of the primary rRNA binding proteins, it binds directly to 16S rRNA where it nucleates assembly of the body of the 30S subunit. Functionally, with S5 and S12 plays an important role in translational accuracy. The protein is Small ribosomal subunit protein uS4 of Paraburkholderia phytofirmans (strain DSM 17436 / LMG 22146 / PsJN) (Burkholderia phytofirmans).